The sequence spans 494 residues: Glutamate decarboxylase 2 (494 aa).

Lys-276 carries the N6-(pyridoxal phosphate)lysine modification. The tract at residues 463–494 (VKEKKMEKEILMEVIVGWRKFVKERKKMNGVC) is calmodulin-binding.

The protein belongs to the group II decarboxylase family. Homohexamer. Interacts with calmodulin. The cofactor is pyridoxal 5'-phosphate. In terms of tissue distribution, expressed in roots, inflorescence stems, flowers, siliques and leaves.

It carries out the reaction L-glutamate + H(+) = 4-aminobutanoate + CO2. Up-regulated by calmodulin binding at physiological pH. Catalyzes the conversion of glutamate to 4-aminobutanoate (GABA). The calmodulin-binding is calcium-dependent and it is proposed to directly or indirectly form a calcium regulated control of GABA biosynthesis. In Arabidopsis thaliana (Mouse-ear cress), this protein is Glutamate decarboxylase 2 (GAD2).